Consider the following 433-residue polypeptide: Mblk-1-related factor 1 (433 aa).

The HTH psq-type 1 domain occupies 145–197 (NKSNILRRNYTVEDLTQAVEDIRQGKLGTRRASVVYGIPRSTLRNKIYKLEAE). Positions 173–193 (TRRASVVYGIPRSTLRNKIYK) form a DNA-binding region, H-T-H motif. Low complexity predominate over residues 235–254 (GNQSDSSSSSPHASMCPSSP). 2 disordered regions span residues 235 to 278 (GNQS…SCSP) and 304 to 338 (ANISNVDTHTPTPISEKSQKMHGNEEWKRSRPKRG). Over residues 304 to 319 (ANISNVDTHTPTPISE) the composition is skewed to polar residues. Over residues 320–332 (KSQKMHGNEEWKR) the composition is skewed to basic and acidic residues. The HTH psq-type 2 domain occupies 334-386 (RPKRGQYRKYDKNALDEAVRSVRRGEMTVHRAGSFFGVPHSTLEYKVKERNLM). Positions 362–382 (VHRAGSFFGVPHSTLEYKVKE) form a DNA-binding region, H-T-H motif. The tract at residues 393 to 433 (LYSHDSSTSEDGSQLVTSTISEKSDSSSHTSTPIPFPISLV) is disordered. A compositionally biased stretch (polar residues) spans 396-408 (HDSSTSEDGSQLV). Residues 409–424 (TSTISEKSDSSSHTST) show a composition bias toward low complexity.

In terms of tissue distribution, expressed in AIM, RIC, AIZ, ADF, ADL, ASK, AWA, AUA, AIN, RIH (or RIR) and RIF head neurons and, in PVP, PVQ and DVA (or DVC) tail neurons, some intestinal cells, somatic gonad and vulva.

It localises to the nucleus. Its function is as follows. May act as transcription activator. Plays a role in neurogenesis by regulating neurite pruning between left and right AIM neurons and left and right RIF neurons during larval development. Regulates olfactory plasticity. This Caenorhabditis elegans protein is Mblk-1-related factor 1.